The primary structure comprises 170 residues: Cyclic pyranopterin monophosphate synthase (170 aa).

Residues 75–77 (LCH) and 113–114 (ME) contribute to the substrate site. The active site involves aspartate 128.

This sequence belongs to the MoaC family. Homohexamer; trimer of dimers.

It catalyses the reaction (8S)-3',8-cyclo-7,8-dihydroguanosine 5'-triphosphate = cyclic pyranopterin phosphate + diphosphate. It functions in the pathway cofactor biosynthesis; molybdopterin biosynthesis. Catalyzes the conversion of (8S)-3',8-cyclo-7,8-dihydroguanosine 5'-triphosphate to cyclic pyranopterin monophosphate (cPMP). The chain is Cyclic pyranopterin monophosphate synthase from Pelotomaculum thermopropionicum (strain DSM 13744 / JCM 10971 / SI).